The sequence spans 259 residues: GDP-perosamine N-formyltransferase (259 aa).

(6S)-5,6,7,8-tetrahydrofolate is bound by residues 89 to 91 (SLI) and 139 to 143 (DENFD).

This sequence belongs to the Fmt family. In terms of assembly, homodimer.

It catalyses the reaction GDP-alpha-D-perosamine + (6R)-10-formyltetrahydrofolate = GDP-N-formyl-alpha-D-perosamine + (6S)-5,6,7,8-tetrahydrofolate + H(+). It participates in bacterial outer membrane biogenesis; lipopolysaccharide biosynthesis. Involved in the lipopolysaccharide (LPS) O-antigen biosynthesis. Catalyzes the transfer of a formyl group to GDP-perosamine, leading to the formation of GDP-N-formylperosamine. Is critical for full bacterial virulence. The sequence is that of GDP-perosamine N-formyltransferase from Brucella abortus (strain 2308).